The primary structure comprises 265 residues: TATA-box-binding protein (265 aa).

A disordered region spans residues 1-40; it reads MYNPSQAVPVSLHKNQDNQDGGQQRSHYPQISSQQSQSYL. Polar residues predominate over residues 18–29; that stretch reads NQDGGQQRSHYP. 2 consecutive repeat copies span residues 91 to 167 and 181 to 258.

Belongs to the TBP family. In terms of assembly, belongs to the TFIID complex together with the TBP-associated factors (TAFs). Binds DNA as monomer.

The protein resides in the nucleus. Its function is as follows. General transcription factor that functions at the core of the DNA-binding multiprotein factor TFIID. Binding of TFIID to the TATA box is the initial transcriptional step of the pre-initiation complex (PIC), playing a role in the activation of eukaryotic genes transcribed by RNA polymerase II. This is TATA-box-binding protein from Strongylocentrotus purpuratus (Purple sea urchin).